A 765-amino-acid chain; its full sequence is Eukaryotic translation initiation factor 3 subunit B (765 aa).

Residues 1–136 (MKNFLPRTLK…LFVECGSMND (136 aa)) form a sufficient for interaction with HCR1 and TIF32 region. The tract at residues 28–261 (RNTQLKRSKI…GVTAWGGPNF (234 aa)) is sufficient for interaction with PIC8. At serine 61 the chain carries Phosphoserine. The residue at position 67 (tyrosine 67) is a Phosphotyrosine. One can recognise an RRM domain in the interval 77 to 162 (QYIVVNGAPV…HRLFLYTMKD (86 aa)). Position 671 is a phosphoserine (serine 671).

The protein belongs to the eIF-3 subunit B family. In terms of assembly, component of the eukaryotic translation initiation factor 3 (eIF-3) complex.

Its subcellular location is the cytoplasm. In terms of biological role, RNA-binding component of the eukaryotic translation initiation factor 3 (eIF-3) complex, which is involved in protein synthesis of a specialized repertoire of mRNAs and, together with other initiation factors, stimulates binding of mRNA and methionyl-tRNAi to the 40S ribosome. The eIF-3 complex specifically targets and initiates translation of a subset of mRNAs involved in cell proliferation. The polypeptide is Eukaryotic translation initiation factor 3 subunit B (Saccharomyces cerevisiae (strain YJM789) (Baker's yeast)).